Consider the following 480-residue polypeptide: Cytochrome b-c1 complex subunit 1, mitochondrial (480 aa).

Residues 1–34 (MAASAVCRAAGAGTRVLLRTRRSPALLRSSDLRG) constitute a mitochondrion transit peptide. N6-acetyllysine occurs at positions 111 and 138. An N6-acetyllysine; alternate modification is found at Lys163. Residue Lys163 is modified to N6-succinyllysine; alternate. Ser212 is modified (phosphoserine). Lys248 carries the post-translational modification N6-acetyllysine.

Belongs to the peptidase M16 family. UQCRC1/QCR1 subfamily. In terms of assembly, component of the ubiquinol-cytochrome c oxidoreductase (cytochrome b-c1 complex, complex III, CIII), a multisubunit enzyme composed of 11 subunits. The complex is composed of 3 respiratory subunits cytochrome b, cytochrome c1 and Rieske protein UQCRFS1, 2 core protein subunits UQCRC1/QCR1 and UQCRC2/QCR2, and 6 low-molecular weight protein subunits UQCRH/QCR6, UQCRB/QCR7, UQCRQ/QCR8, UQCR10/QCR9, UQCR11/QCR10 and subunit 9, the cleavage product of Rieske protein UQCRFS1. The complex exists as an obligatory dimer and forms supercomplexes (SCs) in the inner mitochondrial membrane with NADH-ubiquinone oxidoreductase (complex I, CI) and cytochrome c oxidase (complex IV, CIV), resulting in different assemblies (supercomplex SCI(1)III(2)IV(1) and megacomplex MCI(2)III(2)IV(2)). Interacts with UQCC6. Interacts with STMP1.

It localises to the mitochondrion inner membrane. Functionally, component of the ubiquinol-cytochrome c oxidoreductase, a multisubunit transmembrane complex that is part of the mitochondrial electron transport chain which drives oxidative phosphorylation. The respiratory chain contains 3 multisubunit complexes succinate dehydrogenase (complex II, CII), ubiquinol-cytochrome c oxidoreductase (cytochrome b-c1 complex, complex III, CIII) and cytochrome c oxidase (complex IV, CIV), that cooperate to transfer electrons derived from NADH and succinate to molecular oxygen, creating an electrochemical gradient over the inner membrane that drives transmembrane transport and the ATP synthase. The cytochrome b-c1 complex catalyzes electron transfer from ubiquinol to cytochrome c, linking this redox reaction to translocation of protons across the mitochondrial inner membrane, with protons being carried across the membrane as hydrogens on the quinol. In the process called Q cycle, 2 protons are consumed from the matrix, 4 protons are released into the intermembrane space and 2 electrons are passed to cytochrome c. The 2 core subunits UQCRC1/QCR1 and UQCRC2/QCR2 are homologous to the 2 mitochondrial-processing peptidase (MPP) subunits beta-MPP and alpha-MPP respectively, and they seem to have preserved their MPP processing properties. May be involved in the in situ processing of UQCRFS1 into the mature Rieske protein and its mitochondrial targeting sequence (MTS)/subunit 9 when incorporated into complex III. Seems to play an important role in the maintenance of proper mitochondrial function in nigral dopaminergic neurons. The chain is Cytochrome b-c1 complex subunit 1, mitochondrial (UQCRC1) from Bos taurus (Bovine).